A 386-amino-acid polypeptide reads, in one-letter code: Acetylornithine aminotransferase (386 aa).

Residues 94–95 (GT) and Phe-121 contribute to the pyridoxal 5'-phosphate site. N(2)-acetyl-L-ornithine is bound at residue Arg-124. Position 206–209 (206–209 (DEVQ)) interacts with pyridoxal 5'-phosphate. An N6-(pyridoxal phosphate)lysine modification is found at Lys-235. Ser-263 provides a ligand contact to N(2)-acetyl-L-ornithine. Thr-264 contacts pyridoxal 5'-phosphate.

The protein belongs to the class-III pyridoxal-phosphate-dependent aminotransferase family. ArgD subfamily. As to quaternary structure, homodimer. The cofactor is pyridoxal 5'-phosphate.

It is found in the cytoplasm. It catalyses the reaction N(2)-acetyl-L-ornithine + 2-oxoglutarate = N-acetyl-L-glutamate 5-semialdehyde + L-glutamate. It participates in amino-acid biosynthesis; L-arginine biosynthesis; N(2)-acetyl-L-ornithine from L-glutamate: step 4/4. The sequence is that of Acetylornithine aminotransferase from Listeria monocytogenes serovar 1/2a (strain ATCC BAA-679 / EGD-e).